The following is a 605-amino-acid chain: Protein spinster (605 aa).

Residues 1–94 (MSLKHQKQSY…HPLGEHHHIP (94 aa)) form a disordered region. A compositionally biased stretch (low complexity) spans 27-38 (SSGSSGSSSSEE). The span at 55 to 67 (TTYSSQQLMPSDT) shows a compositional bias: polar residues. Over residues 76-85 (RLRPHHHHHH) the composition is skewed to basic residues. The helical transmembrane segment at 115–137 (FTVTVLCFVNLINYMDRFTIAGV) threads the bilayer. N-linked (GlcNAc...) asparagine glycosylation is present at Asn149. Helical transmembrane passes span 153–173 (GLLQTVFVISYMVCAPIFGYL), 180–200 (PWIMAVGVGLWSTTTLLGSFM), 203–223 (FGWFIAFRALVGIGEASYSTI), 240–260 (MLALFYFAIPVGSGLGYIVGS), and 271–291 (WALRVTPILGIVAVFLILLIK). Asn319 carries N-linked (GlcNAc...) asparagine glycosylation. A run of 5 helical transmembrane segments spans residues 329–349 (FTCVAFVAGALAWWGPSFIYL), 367–387 (FNFGVITMLAGLLGVPLGSFL), 401–421 (VICAFGLLVSAPLLTGACLLV), 431–451 (LIFFGQLALNLNWAIVADILL), and 465–485 (FQILISHALGDAGSPYLVGAI). N-linked (GlcNAc...) asparagine glycosylation is present at Asn519. A helical membrane pass occupies residues 558–578 (STSFVEVLGGIFFIFTACFII). Residue Asn583 is glycosylated (N-linked (GlcNAc...) asparagine).

This sequence belongs to the major facilitator superfamily. Spinster (TC 2.A.1.49) family. In terms of tissue distribution, enriched in brain (at protein level).

It is found in the late endosome membrane. It localises to the lysosome membrane. Functionally, probable sphingolipid transporter that plays a central role in endosomes and/or lysosomes storage. Involved in TGF-beta-mediated synaptic growth regulation both pre- and postsynaptically via its function in endosomal storage regulation. Also required during oogenesis by regulating yolk spheres storage. The sequence is that of Protein spinster (spin) from Drosophila melanogaster (Fruit fly).